The primary structure comprises 347 residues: Cytoplasmic tRNA 2-thiolation protein 1 (347 aa).

Residue serine 200 is modified to Phosphoserine. Residues 315 to 347 (LAIGKGRRGLDEEGPPREPQPSRPLTSEPVPDF) form a disordered region.

This sequence belongs to the TtcA family. CTU1/NCS6/ATPBD3 subfamily. As to quaternary structure, component of a complex at least composed of URM1, CTU2/NCS2 and CTU1/ATPBD3. May form a heterodimer with CTU2/NCS2.

It localises to the cytoplasm. The protein operates within tRNA modification; 5-methoxycarbonylmethyl-2-thiouridine-tRNA biosynthesis. Plays a central role in 2-thiolation of mcm(5)S(2)U at tRNA wobble positions of tRNA(Lys), tRNA(Glu) and tRNA(Gln). Directly binds tRNAs and probably acts by catalyzing adenylation of tRNAs, an intermediate required for 2-thiolation. It is unclear whether it acts as a sulfurtransferase that transfers sulfur from thiocarboxylated URM1 onto the uridine of tRNAs at wobble position. This is Cytoplasmic tRNA 2-thiolation protein 1 from Bos taurus (Bovine).